Consider the following 432-residue polypeptide: Trigger factor (432 aa).

Residues 161–246 enclose the PPIase FKBP-type domain; that stretch reads DDRVTIDFVG…LKKIENMVLP (86 aa).

The protein belongs to the FKBP-type PPIase family. Tig subfamily.

The protein resides in the cytoplasm. The enzyme catalyses [protein]-peptidylproline (omega=180) = [protein]-peptidylproline (omega=0). Functionally, involved in protein export. Acts as a chaperone by maintaining the newly synthesized protein in an open conformation. Functions as a peptidyl-prolyl cis-trans isomerase. The protein is Trigger factor of Haemophilus influenzae (strain PittEE).